Consider the following 112-residue polypeptide: Nitrogen regulatory protein GlnK1 (112 aa).

ADP is bound at residue threonine 29. The ATP site is built by threonine 29 and valine 38. 52 to 54 serves as a coordination point for 2-oxoglutarate; that stretch reads IVD. Residues valine 64, 88–90, and 101–103 each bind ADP; these read DGK and RVR. Residues valine 64, 86–90, and 101–103 contribute to the ATP site; these read PGDGK and RVR.

Belongs to the P(II) protein family. Homotrimer. Interacts and forms a complex with Amt1.

The protein localises to the cytoplasm. Formation of the GlnK1/Amt1 complex is decreased in the presence of Mg-ATP or 2-oxoglutarate. The presence of both effectors abolishes the formation of the complex. Its function is as follows. Involved in the regulation of nitrogen metabolism. Regulates the activity of its targets by protein-protein interaction in response to the nitrogen status of the cell. Regulates the activity of the ammonia channel Amt1 via direct interaction. This chain is Nitrogen regulatory protein GlnK1, found in Methanocaldococcus jannaschii (strain ATCC 43067 / DSM 2661 / JAL-1 / JCM 10045 / NBRC 100440) (Methanococcus jannaschii).